The chain runs to 151 residues: Small ribosomal subunit protein uS15y (151 aa).

The protein belongs to the universal ribosomal protein uS15 family.

This is Small ribosomal subunit protein uS15y from Oryza sativa subsp. japonica (Rice).